A 378-amino-acid chain; its full sequence is Cytochrome b (378 aa).

4 consecutive transmembrane segments (helical) span residues 32-52, 76-97, 112-132, and 177-197; these read FGSLLGLCLVIQILTGLFLAM, WLIRYMHANGASMFFICLFLHV, WNIGVILLFAVMATAFMGYVL, and FFAFHFILPFIVAALVMVHLL. 2 residues coordinate heme b: His82 and His96. His181 and His195 together coordinate heme b. Position 200 (His200) interacts with a ubiquinone. Helical transmembrane passes span 225–245, 287–307, 319–339, and 346–366; these read IKDALGIFLLLLLFMTLVLFF, LGGVLALIFSILILMMFPILH, LSQCLFWILVADLFTLTWIGG, and FITIGQVASIIYFVIILFALP.

It belongs to the cytochrome b family. The cytochrome bc1 complex contains 11 subunits: 3 respiratory subunits (MT-CYB, CYC1 and UQCRFS1), 2 core proteins (UQCRC1 and UQCRC2) and 6 low-molecular weight proteins (UQCRH/QCR6, UQCRB/QCR7, UQCRQ/QCR8, UQCR10/QCR9, UQCR11/QCR10 and a cleavage product of UQCRFS1). This cytochrome bc1 complex then forms a dimer. Heme b is required as a cofactor.

The protein localises to the mitochondrion inner membrane. Component of the ubiquinol-cytochrome c reductase complex (complex III or cytochrome b-c1 complex) that is part of the mitochondrial respiratory chain. The b-c1 complex mediates electron transfer from ubiquinol to cytochrome c. Contributes to the generation of a proton gradient across the mitochondrial membrane that is then used for ATP synthesis. This Sciurus aberti (Abert's squirrel) protein is Cytochrome b (MT-CYB).